The sequence spans 127 residues: 3-aminoacrylate deaminase RutC (127 aa).

Belongs to the RutC family.

It carries out the reaction (Z)-3-aminoacrylate + H2O + H(+) = 3-oxopropanoate + NH4(+). In terms of biological role, involved in pyrimidine catabolism. Catalyzes the deamination of 3-aminoacrylate to malonic semialdehyde, a reaction that can also occur spontaneously. RutC may facilitate the reaction and modulate the metabolic fitness, rather than catalyzing essential functions. The polypeptide is 3-aminoacrylate deaminase RutC (Pseudomonas syringae pv. syringae (strain B728a)).